A 192-amino-acid polypeptide reads, in one-letter code: Xanthine phosphoribosyltransferase (192 aa).

Residues leucine 20 and threonine 26 each contribute to the xanthine site. 127–131 (ANGQA) serves as a coordination point for 5-phospho-alpha-D-ribose 1-diphosphate. Lysine 155 provides a ligand contact to xanthine.

It belongs to the purine/pyrimidine phosphoribosyltransferase family. Xpt subfamily. Homodimer.

It localises to the cytoplasm. It carries out the reaction XMP + diphosphate = xanthine + 5-phospho-alpha-D-ribose 1-diphosphate. It functions in the pathway purine metabolism; XMP biosynthesis via salvage pathway; XMP from xanthine: step 1/1. Its function is as follows. Converts the preformed base xanthine, a product of nucleic acid breakdown, to xanthosine 5'-monophosphate (XMP), so it can be reused for RNA or DNA synthesis. In Streptococcus thermophilus, this protein is Xanthine phosphoribosyltransferase.